Reading from the N-terminus, the 426-residue chain is Glutamate-1-semialdehyde 2,1-aminomutase (426 aa).

N6-(pyridoxal phosphate)lysine is present on Lys265.

The protein belongs to the class-III pyridoxal-phosphate-dependent aminotransferase family. HemL subfamily. As to quaternary structure, homodimer. Pyridoxal 5'-phosphate is required as a cofactor.

Its subcellular location is the cytoplasm. It catalyses the reaction (S)-4-amino-5-oxopentanoate = 5-aminolevulinate. Its pathway is porphyrin-containing compound metabolism; protoporphyrin-IX biosynthesis; 5-aminolevulinate from L-glutamyl-tRNA(Glu): step 2/2. The protein is Glutamate-1-semialdehyde 2,1-aminomutase of Klebsiella pneumoniae subsp. pneumoniae (strain ATCC 700721 / MGH 78578).